Here is a 435-residue protein sequence, read N- to C-terminus: Trigger factor (435 aa).

Residues 163–248 enclose the PPIase FKBP-type domain; that stretch reads DDITLIDFTG…INEIKRKELA (86 aa).

It belongs to the FKBP-type PPIase family. Tig subfamily.

The protein localises to the cytoplasm. It carries out the reaction [protein]-peptidylproline (omega=180) = [protein]-peptidylproline (omega=0). In terms of biological role, involved in protein export. Acts as a chaperone by maintaining the newly synthesized protein in an open conformation. Functions as a peptidyl-prolyl cis-trans isomerase. This chain is Trigger factor, found in Desulforamulus reducens (strain ATCC BAA-1160 / DSM 100696 / MI-1) (Desulfotomaculum reducens).